Reading from the N-terminus, the 45-residue chain is DNA-directed RNA polymerase subunit Rpo12 (45 aa).

Zn(2+) is bound by residues Cys8, Cys23, and Cys26.

The protein belongs to the archaeal Rpo12/eukaryotic RPC10 RNA polymerase subunit family. Part of the RNA polymerase complex. It depends on Zn(2+) as a cofactor.

Its subcellular location is the cytoplasm. It carries out the reaction RNA(n) + a ribonucleoside 5'-triphosphate = RNA(n+1) + diphosphate. DNA-dependent RNA polymerase (RNAP) catalyzes the transcription of DNA into RNA using the four ribonucleoside triphosphates as substrates. The protein is DNA-directed RNA polymerase subunit Rpo12 of Methanothrix thermoacetophila (strain DSM 6194 / JCM 14653 / NBRC 101360 / PT) (Methanosaeta thermophila).